Consider the following 109-residue polypeptide: Phycoerythrin alpha-2 subunit (109 aa).

Residues Asp52, Ser53, Glu63, Arg64, Cys67, Thr72, Lys74, Ala75, and Lys84 each coordinate (2R,3E)-phycoerythrobilin.

Belongs to the phycoerythrin family. As to quaternary structure, heterotetramer of 2 different alpha chains and 2 identical beta chains which form 2 alpha-beta heterodimers within the heterotetramer. The two alpha-beta heterodimers are rotated to an open configuration in contrast to the closed configuration found in other cryptophyte species due to the insertion of a single amino acid, Asp-65, in a conserved region of the alpha chain. In the open form, the central chromophores are not in physical contact but are separated by a water-filled channel. In terms of processing, contains three phycoerythrobilin chromophores with binding mediated by both the alpha and beta subunits.

It localises to the plastid. Its subcellular location is the chloroplast thylakoid membrane. Light-harvesting photosynthetic tetrapyrrole chromophore-protein from the phycobiliprotein complex. This Hemiselmis andersenii (Cryptophyte alga) protein is Phycoerythrin alpha-2 subunit.